Here is a 491-residue protein sequence, read N- to C-terminus: UDP-N-acetylmuramate--L-alanine ligase (491 aa).

126-132 (GTHGKTT) contributes to the ATP binding site.

This sequence belongs to the MurCDEF family.

It localises to the cytoplasm. The enzyme catalyses UDP-N-acetyl-alpha-D-muramate + L-alanine + ATP = UDP-N-acetyl-alpha-D-muramoyl-L-alanine + ADP + phosphate + H(+). It functions in the pathway cell wall biogenesis; peptidoglycan biosynthesis. In terms of biological role, cell wall formation. The sequence is that of UDP-N-acetylmuramate--L-alanine ligase from Klebsiella pneumoniae subsp. pneumoniae (strain ATCC 700721 / MGH 78578).